A 367-amino-acid chain; its full sequence is Glutamate 5-kinase (367 aa).

Lys10 is an ATP binding site. The substrate site is built by Ser50, Asp137, and Asn149. ATP is bound by residues 169–170 (TD) and 211–217 (TGGMETK). The 79-residue stretch at 275–353 (AGDITVDDGA…QDISDILGYE (79 aa)) folds into the PUA domain.

The protein belongs to the glutamate 5-kinase family.

The protein localises to the cytoplasm. The enzyme catalyses L-glutamate + ATP = L-glutamyl 5-phosphate + ADP. The protein operates within amino-acid biosynthesis; L-proline biosynthesis; L-glutamate 5-semialdehyde from L-glutamate: step 1/2. In terms of biological role, catalyzes the transfer of a phosphate group to glutamate to form L-glutamate 5-phosphate. The sequence is that of Glutamate 5-kinase from Sodalis glossinidius (strain morsitans).